A 117-amino-acid polypeptide reads, in one-letter code: NADH-ubiquinone oxidoreductase chain 3 (117 aa).

3 helical membrane passes run 3–23, 56–76, and 85–105; these read LLLT…IVSF, FFLV…LLPL, and PMFT…GLIY.

It belongs to the complex I subunit 3 family.

It localises to the mitochondrion membrane. It catalyses the reaction a ubiquinone + NADH + 5 H(+)(in) = a ubiquinol + NAD(+) + 4 H(+)(out). Its function is as follows. Core subunit of the mitochondrial membrane respiratory chain NADH dehydrogenase (Complex I) that is believed to belong to the minimal assembly required for catalysis. Complex I functions in the transfer of electrons from NADH to the respiratory chain. The immediate electron acceptor for the enzyme is believed to be ubiquinone. In Tetraodon nigroviridis (Spotted green pufferfish), this protein is NADH-ubiquinone oxidoreductase chain 3 (MT-ND3).